We begin with the raw amino-acid sequence, 285 residues long: CCR4-NOT transcription complex subunit 7 (285 aa).

Residues Asp40, Glu42, Asp161, Asp230, and Glu278 each contribute to the a divalent metal cation site.

Belongs to the CAF1 family. Component of the CCR4-NOT complex; distinct complexes seem to exist that differ in the participation of probably mutually exclusive catalytic subunits; the complex contains two deadenylase subunits, CNOT6 or CNOT6L, and CNOT7 or CNOT8. In the complex, interacts directly with CNOT1. Interacts with AGO2. Interacts with TOB1; recruited by TOB1 to a ternary complex with CPEB3 which is required for mRNA deadenylation and decay. Interacts with BTG1. Interacts with BTG2. Interacts with NANOS2. Interacts with ZFP36, ZFP36L1 and ZFP36L2; these interactions are inhibited in response to phorbol 12-myristate 13-acetate (PMA) treatment in a p38 MAPK-dependent manner. Interacts with BTG4. Interacts with EIF4E; this interaction is increased by CNOT7 interaction with BTG4. It depends on Mn(2+) as a cofactor. Requires Mg(2+) as cofactor. The cofactor is Co(2+).

Its subcellular location is the nucleus. It localises to the cytoplasm. The protein localises to the P-body. It is found in the cytoplasmic ribonucleoprotein granule. It carries out the reaction Exonucleolytic cleavage of poly(A) to 5'-AMP.. Functionally, has 3'-5' poly(A) exoribonuclease activity for synthetic poly(A) RNA substrate. Its function seems to be partially redundant with that of CNOT8. Catalytic component of the CCR4-NOT complex which is one of the major cellular mRNA deadenylases and is linked to various cellular processes including bulk mRNA degradation, miRNA-mediated repression, translational repression during translational initiation and general transcription regulation. During miRNA-mediated repression the complex also seems to act as translational repressor during translational initiation. Additional complex functions may be a consequence of its influence on mRNA expression. Required for miRNA-mediated mRNA deadenylation. Associates with members of the BTG family such as TOB1 and BTG2 and is required for their anti-proliferative activity. The protein is CCR4-NOT transcription complex subunit 7 (CNOT7) of Bos taurus (Bovine).